The following is a 483-amino-acid chain: Phosphoenolpyruvate carboxylase (483 aa).

The interval 1-20 is disordered; that stretch reads MKVPRCMSTQHPDNVNPPFF.

The protein belongs to the PEPCase type 2 family. In terms of assembly, homotetramer. Mg(2+) is required as a cofactor.

The catalysed reaction is oxaloacetate + phosphate = phosphoenolpyruvate + hydrogencarbonate. Its activity is regulated as follows. Inhibited by NaCl, KCl, ATP, ADP, GTP and aspartate. Unlike E.coli, not regulated by acetyl-CoA. Catalyzes the irreversible beta-carboxylation of phosphoenolpyruvate (PEP) to form oxaloacetate (OAA), a four-carbon dicarboxylic acid source for the tricarboxylic acid cycle. The protein is Phosphoenolpyruvate carboxylase (ppcA) of Methanothermobacter thermautotrophicus (strain ATCC 29096 / DSM 1053 / JCM 10044 / NBRC 100330 / Delta H) (Methanobacterium thermoautotrophicum).